The primary structure comprises 353 residues: Sesquiterpene synthase Agr8 (353 aa).

Mg(2+)-binding residues include aspartate 82, asparagine 220, serine 224, and glutamate 228. Positions 82–86 match the DDXXD motif motif; it reads DEYTD. 2 residues coordinate (2E,6E)-farnesyl diphosphate: arginine 309 and tyrosine 310.

It belongs to the terpene synthase family. The cofactor is Mg(2+).

It carries out the reaction (2E,6E)-farnesyl diphosphate = gamma-muurolene + diphosphate. The enzyme catalyses (2E,6E)-farnesyl diphosphate = alpha-selinene + diphosphate. The catalysed reaction is (2E,6E)-farnesyl diphosphate = delta-cadinene + diphosphate. Terpene cyclase that catalyzes the cyclization of farnesyl diphosphate (FPP) to various sesquiterpenes, including beta-elemene, gamma-muurolene, alpha-selinene, beta-selinene, beta-cadinene, delta-cadinene and alpha-cadinol. This is Sesquiterpene synthase Agr8 from Cyclocybe aegerita (Black poplar mushroom).